A 351-amino-acid chain; its full sequence is Lipoyl synthase (351 aa).

Over residues 1-10 (MNDSGNSSKV) the composition is skewed to polar residues. Residues 1–27 (MNDSGNSSKVNVRPPSAGLGAPSPGKR) are disordered. A compositionally biased stretch (low complexity) spans 14-24 (PPSAGLGAPSP). [4Fe-4S] cluster-binding residues include Cys-74, Cys-79, Cys-85, Cys-100, Cys-104, Cys-107, and Ser-311. In terms of domain architecture, Radical SAM core spans 86-300 (WEDREATFLI…KEQAKEIGFS (215 aa)).

It belongs to the radical SAM superfamily. Lipoyl synthase family. [4Fe-4S] cluster serves as cofactor.

The protein localises to the cytoplasm. It catalyses the reaction [[Fe-S] cluster scaffold protein carrying a second [4Fe-4S](2+) cluster] + N(6)-octanoyl-L-lysyl-[protein] + 2 oxidized [2Fe-2S]-[ferredoxin] + 2 S-adenosyl-L-methionine + 4 H(+) = [[Fe-S] cluster scaffold protein] + N(6)-[(R)-dihydrolipoyl]-L-lysyl-[protein] + 4 Fe(3+) + 2 hydrogen sulfide + 2 5'-deoxyadenosine + 2 L-methionine + 2 reduced [2Fe-2S]-[ferredoxin]. The protein operates within protein modification; protein lipoylation via endogenous pathway; protein N(6)-(lipoyl)lysine from octanoyl-[acyl-carrier-protein]: step 2/2. Its function is as follows. Catalyzes the radical-mediated insertion of two sulfur atoms into the C-6 and C-8 positions of the octanoyl moiety bound to the lipoyl domains of lipoate-dependent enzymes, thereby converting the octanoylated domains into lipoylated derivatives. This is Lipoyl synthase from Tropheryma whipplei (strain TW08/27) (Whipple's bacillus).